Reading from the N-terminus, the 160-residue chain is uncharacterized protein (160 aa).

The chain crosses the membrane as a helical span at residues 8–28 (LLFILVFISGFILFTVYSYTA).

It is found in the membrane. This is an uncharacterized protein from Escherichia coli (strain K12).